The chain runs to 368 residues: Agmatine deiminase (368 aa).

C357 (amidino-cysteine intermediate) is an active-site residue.

The protein belongs to the agmatine deiminase family. In terms of assembly, homodimer.

The catalysed reaction is agmatine + H2O = N-carbamoylputrescine + NH4(+). Its pathway is amine and polyamine biosynthesis; putrescine biosynthesis via agmatine pathway; N-carbamoylputrescine from agmatine: step 1/1. Mediates the hydrolysis of agmatine into N-carbamoylputrescine in the arginine decarboxylase (ADC) pathway of putrescine biosynthesis, a basic polyamine. The sequence is that of Agmatine deiminase from Pseudomonas syringae pv. tomato (strain ATCC BAA-871 / DC3000).